An 852-amino-acid chain; its full sequence is DNA mismatch repair protein MutS (852 aa).

Residue 602–609 (GPNMSGKS) participates in ATP binding.

It belongs to the DNA mismatch repair MutS family.

Its function is as follows. This protein is involved in the repair of mismatches in DNA. It is possible that it carries out the mismatch recognition step. This protein has a weak ATPase activity. The chain is DNA mismatch repair protein MutS from Streptococcus thermophilus (strain CNRZ 1066).